The following is a 301-amino-acid chain: Sulfate adenylyltransferase subunit 2 (301 aa).

Residues 282 to 301 form a disordered region; it reads RLIDRDEAGSMEKKKREGYF.

This sequence belongs to the PAPS reductase family. CysD subfamily. As to quaternary structure, heterodimer composed of CysD, the smaller subunit, and CysN.

It carries out the reaction sulfate + ATP + H(+) = adenosine 5'-phosphosulfate + diphosphate. It participates in sulfur metabolism; hydrogen sulfide biosynthesis; sulfite from sulfate: step 1/3. Its function is as follows. With CysN forms the ATP sulfurylase (ATPS) that catalyzes the adenylation of sulfate producing adenosine 5'-phosphosulfate (APS) and diphosphate, the first enzymatic step in sulfur assimilation pathway. APS synthesis involves the formation of a high-energy phosphoric-sulfuric acid anhydride bond driven by GTP hydrolysis by CysN coupled to ATP hydrolysis by CysD. The chain is Sulfate adenylyltransferase subunit 2 from Chelativorans sp. (strain BNC1).